Here is a 338-residue protein sequence, read N- to C-terminus: Aspartate-semialdehyde dehydrogenase (338 aa).

NADP(+) contacts are provided by residues 13 to 16 (TGNV) and 41 to 42 (NS). Arg101 is a phosphate binding site. Cys132 (acyl-thioester intermediate) is an active-site residue. Gln159 is a substrate binding site. 162 to 163 (SG) provides a ligand contact to NADP(+). Phosphate is bound at residue Lys216. Arg237 contributes to the substrate binding site. His244 serves as the catalytic Proton acceptor. Asn317 is an NADP(+) binding site.

Belongs to the aspartate-semialdehyde dehydrogenase family. As to quaternary structure, homodimer.

It carries out the reaction L-aspartate 4-semialdehyde + phosphate + NADP(+) = 4-phospho-L-aspartate + NADPH + H(+). Its pathway is amino-acid biosynthesis; L-lysine biosynthesis via DAP pathway; (S)-tetrahydrodipicolinate from L-aspartate: step 2/4. The protein operates within amino-acid biosynthesis; L-methionine biosynthesis via de novo pathway; L-homoserine from L-aspartate: step 2/3. It participates in amino-acid biosynthesis; L-threonine biosynthesis; L-threonine from L-aspartate: step 2/5. Catalyzes the NADPH-dependent formation of L-aspartate-semialdehyde (L-ASA) by the reductive dephosphorylation of L-aspartyl-4-phosphate. This chain is Aspartate-semialdehyde dehydrogenase, found in Rickettsia bellii (strain RML369-C).